The following is a 92-amino-acid chain: Small ribosomal subunit protein uS19c (92 aa).

The protein belongs to the universal ribosomal protein uS19 family.

Its subcellular location is the plastid. The protein localises to the chloroplast. Protein S19 forms a complex with S13 that binds strongly to the 16S ribosomal RNA. The chain is Small ribosomal subunit protein uS19c from Thalassiosira pseudonana (Marine diatom).